We begin with the raw amino-acid sequence, 439 residues long: Exodeoxyribonuclease 7 large subunit (439 aa).

This sequence belongs to the XseA family. In terms of assembly, heterooligomer composed of large and small subunits.

The protein localises to the cytoplasm. It catalyses the reaction Exonucleolytic cleavage in either 5'- to 3'- or 3'- to 5'-direction to yield nucleoside 5'-phosphates.. Its function is as follows. Bidirectionally degrades single-stranded DNA into large acid-insoluble oligonucleotides, which are then degraded further into small acid-soluble oligonucleotides. The polypeptide is Exodeoxyribonuclease 7 large subunit (Haemophilus influenzae (strain 86-028NP)).